The primary structure comprises 202 residues: Peptidyl-tRNA hydrolase (202 aa).

Tyr16 contributes to the tRNA binding site. Catalysis depends on His21, which acts as the Proton acceptor. TRNA-binding residues include Tyr68, Asn70, and Asn116.

It belongs to the PTH family. In terms of assembly, monomer.

The protein localises to the cytoplasm. The catalysed reaction is an N-acyl-L-alpha-aminoacyl-tRNA + H2O = an N-acyl-L-amino acid + a tRNA + H(+). Its function is as follows. Hydrolyzes ribosome-free peptidyl-tRNAs (with 1 or more amino acids incorporated), which drop off the ribosome during protein synthesis, or as a result of ribosome stalling. Catalyzes the release of premature peptidyl moieties from peptidyl-tRNA molecules trapped in stalled 50S ribosomal subunits, and thus maintains levels of free tRNAs and 50S ribosomes. This is Peptidyl-tRNA hydrolase from Treponema pallidum (strain Nichols).